The primary structure comprises 93 residues: Acylphosphatase (93 aa).

The 88-residue stretch at 6–93 (RAIVTVKGLV…GEFDTFDVRY (88 aa)) folds into the Acylphosphatase-like domain. Catalysis depends on residues R21 and N39.

Belongs to the acylphosphatase family.

The catalysed reaction is an acyl phosphate + H2O = a carboxylate + phosphate + H(+). The protein is Acylphosphatase (acyP) of Geobacter metallireducens (strain ATCC 53774 / DSM 7210 / GS-15).